The following is a 131-amino-acid chain: Fumarate reductase subunit C (131 aa).

A run of 3 helical transmembrane segments spans residues 30 to 50 (EGTA…LFAL), 63 to 83 (FLQN…ALLH), and 109 to 129 (IIKS…FVAL).

The protein belongs to the FrdC family. As to quaternary structure, part of an enzyme complex containing four subunits: a flavoprotein (FrdA), an iron-sulfur protein (FrdB), and two hydrophobic anchor proteins (FrdC and FrdD).

It is found in the cell inner membrane. In terms of biological role, two distinct, membrane-bound, FAD-containing enzymes are responsible for the catalysis of fumarate and succinate interconversion; fumarate reductase is used in anaerobic growth, and succinate dehydrogenase is used in aerobic growth. Anchors the catalytic components of the fumarate reductase complex to the cell inner membrane, binds quinones. The protein is Fumarate reductase subunit C of Shigella boydii serotype 18 (strain CDC 3083-94 / BS512).